The chain runs to 208 residues: Kininogen-1b (208 aa).

An N-terminal signal peptide occupies residues 1-23 (MRLWFCLSFFIVLCLEHFPETLA). Over residues 27–44 (NVPESEEKTEQYLRDLPK) the composition is skewed to basic and acidic residues. The disordered stretch occupies residues 27 to 208 (NVPESEEKTE…RGKFHSQSHV (182 aa)).

The protein belongs to the bradykinin-related peptide family. As to expression, expressed by the skin glands.

The protein resides in the secreted. In terms of biological role, in vitro, produces constriction of guinea pig ileum smooth muscle. May target bradykinin receptors (BDKRB). In Bombina maxima (Giant fire-bellied toad), this protein is Kininogen-1b.